The primary structure comprises 389 residues: Protein RAFTIN 1A (389 aa).

The N-terminal stretch at 1-20 (MARFLVALLATTLVAVQAGG) is a signal peptide. Residues 73–92 (DRPPFDYRDYSRSPPDDEPS) are compositionally biased toward basic and acidic residues. The interval 73–105 (DRPPFDYRDYSRSPPDDEPSKSTGAASGARDFD) is disordered. A BURP domain is found at 169-383 (FFHEEAVRVG…PYGHIIWAKN (215 aa)).

Specifically expressed in anthers, in the tapetum and microspores (at protein level).

Its function is as follows. Required for pollen development. Probably synthesized in the tapetum, packaged in Ubisch bodies and transported at appropriate stages to the micropsores. This is Protein RAFTIN 1A (RAFTIN1A) from Triticum aestivum (Wheat).